The sequence spans 214 residues: Urease accessory protein UreF (214 aa).

The protein belongs to the UreF family. UreD, UreF and UreG form a complex that acts as a GTP-hydrolysis-dependent molecular chaperone, activating the urease apoprotein by helping to assemble the nickel containing metallocenter of UreC. The UreE protein probably delivers the nickel.

The protein localises to the cytoplasm. Functionally, required for maturation of urease via the functional incorporation of the urease nickel metallocenter. The protein is Urease accessory protein UreF of Ruegeria sp. (strain TM1040) (Silicibacter sp.).